The primary structure comprises 238 residues: SPEG neighbor protein (238 aa).

In terms of domain architecture, IQ spans 29–55 (QSAAIRIQASYRGHRSRKELREKGPPR). Ig-like domains are found at residues 54–143 (PRVL…ARIL) and 147–236 (PTKI…ARVD).

This Homo sapiens (Human) protein is SPEG neighbor protein.